Reading from the N-terminus, the 331-residue chain is Adenosine deaminase (331 aa).

The Zn(2+) site is built by histidine 12 and histidine 14. Histidine 14, aspartate 16, and glycine 170 together coordinate substrate. Histidine 197 is a binding site for Zn(2+). Glutamate 200 functions as the Proton donor in the catalytic mechanism. Aspartate 278 contributes to the Zn(2+) binding site. Aspartate 279 serves as a coordination point for substrate.

It belongs to the metallo-dependent hydrolases superfamily. Adenosine and AMP deaminases family. Adenosine deaminase subfamily. Requires Zn(2+) as cofactor.

The catalysed reaction is adenosine + H2O + H(+) = inosine + NH4(+). The enzyme catalyses 2'-deoxyadenosine + H2O + H(+) = 2'-deoxyinosine + NH4(+). Catalyzes the hydrolytic deamination of adenosine and 2-deoxyadenosine. The polypeptide is Adenosine deaminase (Shewanella putrefaciens (strain CN-32 / ATCC BAA-453)).